Reading from the N-terminus, the 312-residue chain is Magnesium protoporphyrin IX methyltransferase, chloroplastic (312 aa).

The N-terminal 39 residues, 1 to 39, are a transit peptide targeting the chloroplast; sequence MPFAPSLLSSSSSVSQFLPRFPNATRFNVTPRSRAATVV.

The protein belongs to the class I-like SAM-binding methyltransferase superfamily. Magnesium protoporphyrin O-methyltransferase family.

It localises to the plastid. The protein resides in the chloroplast membrane. The protein localises to the chloroplast thylakoid membrane. The enzyme catalyses Mg-protoporphyrin IX + S-adenosyl-L-methionine = Mg-protoporphyrin IX 13-monomethyl ester + S-adenosyl-L-homocysteine. The protein operates within porphyrin-containing compound metabolism; chlorophyll biosynthesis. Its activity is regulated as follows. Regulated by the folate status via an increased concentration of S-adenosyl-homocysteine (AdoHcy), a potent inhibitor of most AdoMet-dependent methyltransferases. Functionally, converts Mg-protoporphyrin IX to Mg-protoporphyrin IX methylester using S-adenosyl-L-methionine as a cofactor. Involved in chloroplast-to-nucleus signaling by acting as a negative effector of nuclear photosynthetic gene expression. The sequence is that of Magnesium protoporphyrin IX methyltransferase, chloroplastic (CHLM) from Arabidopsis thaliana (Mouse-ear cress).